The chain runs to 520 residues: Transactivator/viroplasmin protein (520 aa).

Positions 487 to 520 are disordered; that stretch reads QNASADSGPKDGPPPTRSIVEKEDVPTTSSKQVD.

The protein belongs to the caulimoviridae viroplasmin family.

Its subcellular location is the host cytoplasm. Its function is as follows. Enhances the ribosomal termination-reinitiation event leading to the translation of major open reading frames on the polycistronic viral RNAs. The polypeptide is Transactivator/viroplasmin protein (Arabidopsis thaliana (Mouse-ear cress)).